The following is a 159-amino-acid chain: Capsid protein (159 aa).

At serine 2 the chain carries N-acetylserine; by host.

It belongs to the virgaviridae capsid protein family.

The protein resides in the virion. Its function is as follows. Capsid protein self-assembles to form rod-shaped virions about 18 nm in diameter with a central canal enclosing the viral genomic RNA. The chain is Capsid protein (CP) from Tomato mosaic virus (strain L) (ToMV).